The primary structure comprises 646 residues: Kinesin-like protein klp-20 (646 aa).

One can recognise a Kinesin motor domain in the interval 6-331 (KVKVVVRCRP…LRYANRAKNI (326 aa)). 91 to 98 (GQTGTGKT) lines the ATP pocket. Residues 342–552 (KDAQLRKFQL…LRKELLLNIA (211 aa)) adopt a coiled-coil conformation. Residues 525-550 (LEEDHQRQVEAMLDDIRQLRKELLLN) are interaction with klp-11. The disordered stretch occupies residues 623–646 (TAEHRPRTSSKKHRASIRLQQLLT). The segment covering 629–638 (RTSSKKHRAS) has biased composition (basic residues).

This sequence belongs to the TRAFAC class myosin-kinesin ATPase superfamily. Kinesin family. Kinesin II subfamily. Component of the kinesin II motor complex, a heterotrimeric complex composed of kap-1, klp-11 and klp-20. Interacts (via C-terminus) with klp-11 (via C-terminus) to form a heterodimer. Furthermore, within the heterodimer, the C-termini of klp-20 and klp-11 interact to form a coiled coil (stalk) or tail domain, and this is necessary for association with kap-1, and kinesin II motor complex activity upon IFT cargo binding. Prior to cargo binding, the klp-11/klp-20 heterodimer is autoinhibited by the tail domain of the heterodimer, which folds onto the kinesin motor domain. Cargo binding to the heterodimer relieves the autoinhibition, and allows for an extended conformation of the tail domain, and function of the heterodimer.

The protein localises to the cell projection. The protein resides in the cilium. It localises to the cytoplasm. It is found in the cytoskeleton. Functionally, component of the kinesin II motor complex (composed of kap-1 and the heterodimeric motor proteins klp-11 and klp-20) which is required for intraflagellar transport (IFT). Heterodimerizes with klp-11 to form a 'processive' molecular motor upon IFT cargo binding, which, within the kinesin II motor complex, binds to and moves along microtubules in a unidirectional manner (without dissociation of the heterodimer), and in turn, is responsible for the IFT of cargo. Specifically, the kinesin II motor complex, together with the kinesin motor protein osm-3 moves along microtubules and is required for anterograde IFT along the middle segment of the sensory neuron cilia. In particular, the kinesin II motor complex delivers specific ciliary cargo proteins such as che-3 which are related to motility to ciliary tips. This is likely mediated by IFT complexes A and B. The protein is Kinesin-like protein klp-20 of Caenorhabditis elegans.